A 150-amino-acid polypeptide reads, in one-letter code: UPF0178 protein Bcep18194_A4809 (150 aa).

The protein belongs to the UPF0178 family.

In Burkholderia lata (strain ATCC 17760 / DSM 23089 / LMG 22485 / NCIMB 9086 / R18194 / 383), this protein is UPF0178 protein Bcep18194_A4809.